We begin with the raw amino-acid sequence, 250 residues long: Probable transcriptional regulatory protein Cag_0165 (250 aa).

The protein belongs to the TACO1 family.

The protein localises to the cytoplasm. This is Probable transcriptional regulatory protein Cag_0165 from Chlorobium chlorochromatii (strain CaD3).